Consider the following 352-residue polypeptide: Rhodopsin (352 aa).

Topologically, residues 1–36 are extracellular; it reads MNGTEGPDFYIPFSNKTGVVRSPFEYPQYYLAEPWK. N-linked (GlcNAc...) asparagine glycans are attached at residues Asn2 and Asn15. The helical transmembrane segment at 37–61 threads the bilayer; the sequence is YSALAAYMFMLIILGFPINFLTLYV. Topologically, residues 62 to 73 are cytoplasmic; that stretch reads TVQHKKLRSPLN. Residues 74–96 traverse the membrane as a helical segment; the sequence is YILLNLAVADLFMVLGGFTTTLY. The Extracellular portion of the chain corresponds to 97-110; that stretch reads TSMNGYFVFGVTGC. Cys110 and Cys187 are oxidised to a cystine. The chain crosses the membrane as a helical span at residues 111-133; it reads YFEGFFATLGGEVALWCLVVLAI. The 'Ionic lock' involved in activated form stabilization motif lies at 134-136; that stretch reads ERY. Residues 134–152 are Cytoplasmic-facing; sequence ERYIVVCKPMSNFRFGENH. A helical transmembrane segment spans residues 153–173; sequence AIMGVVFTWIMALTCAAPPLV. The Extracellular portion of the chain corresponds to 174–202; it reads GWSRYIPEGMQCSCGVDYYTLKPEVNNES. Residues 203–224 form a helical membrane-spanning segment; sequence FVIYMFVVHFAIPLAVIFFCYG. The Cytoplasmic segment spans residues 225–252; the sequence is RLVCTVKEAAAQQQESATTQKAEKEVTR. The chain crosses the membrane as a helical span at residues 253–274; that stretch reads MVIIMVVSFLICWVPYASVAFY. Over 275-286 the chain is Extracellular; sequence IFSNQGSDFGPV. The chain crosses the membrane as a helical span at residues 287-308; the sequence is FMTIPAFFAKSSAIYNPVIYIV. Lys296 bears the N6-(retinylidene)lysine mark. The Cytoplasmic portion of the chain corresponds to 309 to 352; that stretch reads MNKQFRNCMITTLCCGKNPLGDDETATGSKTETSSVSTSQVSPA. S-palmitoyl cysteine attachment occurs at residues Cys322 and Cys323. The disordered stretch occupies residues 332–352; that stretch reads ETATGSKTETSSVSTSQVSPA. Over residues 335-352 the composition is skewed to low complexity; the sequence is TGSKTETSSVSTSQVSPA.

Belongs to the G-protein coupled receptor 1 family. Opsin subfamily. In terms of processing, contains one covalently linked retinal chromophore. Upon light absorption, the covalently bound 11-cis-retinal is converted to all-trans-retinal. After hydrolysis of the Schiff base and release of the covalently bound all-trans-retinal, active rhodopsin is regenerated by binding of a fresh molecule of 11-cis-retinal. As to expression, expressed in rod-shaped photoreceptor cells in the retina that mediate vision in dim ligh (at protein level).

The protein localises to the membrane. The protein resides in the cell projection. It is found in the cilium. Its subcellular location is the photoreceptor outer segment. Functionally, photoreceptor required for image-forming vision at low light intensity. Required for photoreceptor cell viability after birth. Light-induced isomerization of 11-cis to all-trans retinal triggers a conformational change that activates signaling via G-proteins. Subsequent receptor phosphorylation mediates displacement of the bound G-protein alpha subunit by arrestin and terminates signaling. This chain is Rhodopsin (RHO), found in Alligator mississippiensis (American alligator).